The primary structure comprises 137 residues: Large ribosomal subunit protein eL28 (137 aa).

Ser2 is modified (N-acetylserine). Glycyl lysine isopeptide (Lys-Gly) (interchain with G-Cter in SUMO2) cross-links involve residues Lys58 and Lys65. Ser115 bears the Phosphoserine mark.

It belongs to the eukaryotic ribosomal protein eL28 family. Component of the large ribosomal subunit.

The protein resides in the cytoplasm. Component of the large ribosomal subunit. The ribosome is a large ribonucleoprotein complex responsible for the synthesis of proteins in the cell. In Oryctolagus cuniculus (Rabbit), this protein is Large ribosomal subunit protein eL28 (RPL28).